Reading from the N-terminus, the 540-residue chain is Putative cysteine ligase BshC (540 aa).

Positions 455 to 491 (GKENLKRLIRVVNSFEEKVKQRHRKNNQVAIQQLQKI) form a coiled coil.

The protein belongs to the BshC family.

Functionally, involved in bacillithiol (BSH) biosynthesis. May catalyze the last step of the pathway, the addition of cysteine to glucosamine malate (GlcN-Mal) to generate BSH. In Desulforamulus reducens (strain ATCC BAA-1160 / DSM 100696 / MI-1) (Desulfotomaculum reducens), this protein is Putative cysteine ligase BshC.